The following is a 297-amino-acid chain: Putative F-box protein At2g19630 (297 aa).

Residues 11–60 (TKNSLQIPIDLIIEIFLRLSVNSIARCRCVSKQWASTLSRPYFTELFLTR) form the F-box domain.

This is Putative F-box protein At2g19630 from Arabidopsis thaliana (Mouse-ear cress).